Here is a 246-residue protein sequence, read N- to C-terminus: Small ribosomal subunit protein uS2 (246 aa).

A disordered region spans residues 224-246; that stretch reads AKQGEEEAEAAEETAPETETTTA. Positions 229–239 are enriched in acidic residues; that stretch reads EEAEAAEETAP.

It belongs to the universal ribosomal protein uS2 family.

This is Small ribosomal subunit protein uS2 from Bacillus velezensis (strain DSM 23117 / BGSC 10A6 / LMG 26770 / FZB42) (Bacillus amyloliquefaciens subsp. plantarum).